The chain runs to 176 residues: Vitamin K epoxide reductase complex subunit 1-like protein 1 (176 aa).

Residues methionine 1–arginine 13 lie on the Cytoplasmic side of the membrane. Residues tryptophan 14 to valine 36 traverse the membrane as a helical segment. The Lumenal segment spans residues glutamate 37–asparagine 87. An intrachain disulfide couples cysteine 50 to cysteine 58. Residue asparagine 87 participates in (S)-warfarin binding. Residues serine 88–glycine 102 traverse the membrane as a helical segment. Topologically, residues methionine 103–alanine 107 are cytoplasmic. The helical transmembrane segment at valine 108–leucine 135 threads the bilayer. Over lysine 136–phenylalanine 138 the chain is Lumenal. Cysteine 139 and cysteine 142 are joined by a disulfide. Residues cysteine 139–leucine 160 traverse the membrane as a helical segment. Residues cysteine 142 and tyrosine 146 each contribute to the phylloquinone site. Tyrosine 146 is a binding site for (S)-warfarin. Residues valine 161–aspartate 176 lie on the Cytoplasmic side of the membrane.

It belongs to the VKOR family.

Its subcellular location is the endoplasmic reticulum membrane. The enzyme catalyses phylloquinone + [protein]-disulfide + H2O = 2,3-epoxyphylloquinone + [protein]-dithiol. It catalyses the reaction phylloquinol + [protein]-disulfide = phylloquinone + [protein]-dithiol. Its activity is regulated as follows. Inhibited by warfarin (coumadin). Warfarin locks VKORC1 in both redox states into the closed conformation. Its function is as follows. Involved in vitamin K metabolism. Can reduce inactive vitamin K 2,3-epoxide to active vitamin K, and may contribute to vitamin K-mediated protection against oxidative stress. Plays a role in vitamin K-dependent gamma-carboxylation of Glu residues in target proteins. The sequence is that of Vitamin K epoxide reductase complex subunit 1-like protein 1 (VKORC1L1) from Homo sapiens (Human).